Consider the following 147-residue polypeptide: Low molecular weight protein-tyrosine-phosphatase Wzb (147 aa).

The Nucleophile role is filled by Cys9. Arg15 is a catalytic residue. The active-site Proton donor is Asp115.

This sequence belongs to the low molecular weight phosphotyrosine protein phosphatase family.

It carries out the reaction O-phospho-L-tyrosyl-[protein] + H2O = L-tyrosyl-[protein] + phosphate. Its pathway is glycan metabolism; exopolysaccharide biosynthesis. In terms of biological role, dephosphorylates Wzc. Required for the extracellular polysaccharide colanic acid synthesis. Probably involved in the export of colanic acid from the cell to medium. Involved in protection of cells against contact-dependent growth inhibition (CDI). The protein is Low molecular weight protein-tyrosine-phosphatase Wzb (wzb) of Escherichia coli O157:H7.